We begin with the raw amino-acid sequence, 245 residues long: Uroporphyrinogen-III C-methyltransferase (245 aa).

S-adenosyl-L-homocysteine-binding positions include proline 12, 87–89 (GGD), 117–118 (TA), methionine 168, alanine 197, and alanine 225.

It belongs to the precorrin methyltransferase family.

It catalyses the reaction uroporphyrinogen III + 2 S-adenosyl-L-methionine = precorrin-2 + 2 S-adenosyl-L-homocysteine + H(+). It functions in the pathway cofactor biosynthesis; adenosylcobalamin biosynthesis; precorrin-2 from uroporphyrinogen III: step 1/1. Its pathway is porphyrin-containing compound metabolism; siroheme biosynthesis; precorrin-2 from uroporphyrinogen III: step 1/1. Its function is as follows. Catalyzes the two successive C-2 and C-7 methylation reactions involved in the conversion of uroporphyrinogen III to precorrin-2 via the intermediate formation of precorrin-1. It is a step in the biosynthesis of both cobalamin (vitamin B12) and siroheme. The sequence is that of Uroporphyrinogen-III C-methyltransferase (cobA) from Pseudomonas aeruginosa (strain ATCC 15692 / DSM 22644 / CIP 104116 / JCM 14847 / LMG 12228 / 1C / PRS 101 / PAO1).